The sequence spans 374 residues: Lipopolysaccharide glucosyltransferase WaaG (374 aa).

Positions 15 and 19 each coordinate UDP-alpha-D-glucose. A membrane-interacting region region spans residues tyrosine 103 to phenylalanine 132. UDP-alpha-D-glucose is bound by residues arginine 173, arginine 208, lysine 209, arginine 261, glutamate 281, alanine 283, glycine 284, isoleucine 285, valine 286, and glutamate 289.

Belongs to the glycosyltransferase group 1 family. Glycosyltransferase 4 subfamily.

Its subcellular location is the cell inner membrane. It functions in the pathway bacterial outer membrane biogenesis; LPS core biosynthesis. With respect to regulation, inhibited by divalent metal ions such as Mg(2+), Mn(2+), Ca(2+), Zn(2+), Co(2+), Ni(2+) and Cu(2+). Functionally, glucosyltransferase involved in the biosynthesis of the core oligosaccharide region of lipopolysaccharide (LPS). Catalyzes the addition of the first outer-core glucose from UDP-glucose to the inner-core heptose II. Cannot use other sugar donors, such as UDP-galactose, UDP-glucuronic acid, UDP-galacuronic acid, GDP-mannose, ADP-glucose and GDP-glucose. In the absence of a lipid acceptor, can slowly hydrolyze UDP-glucose. The polypeptide is Lipopolysaccharide glucosyltransferase WaaG (Escherichia coli (strain K12)).